The chain runs to 227 residues: MKFAVIVFPGSNCDVDMFHAIKDELGEEVDYVWHDRENLDEYDAILLPGGFSYGDYLRCGAISRFANAMKAVQKAAEQGKPILGVCNGFQILVESGLLPGALMRNENLKFMCRTVQLRVENNETMFTSQYEKNEVINIPIAHGEGNYYCDEATLKQLEENNQIAFRYVENPNGSVSDIAGIVNEKGNVLGMMPHPERAVDELLGGAEGLKVFQSILKQWRETYVVNA.

A Glutamine amidotransferase type-1 domain is found at 3–225; the sequence is FAVIVFPGSN…LKQWRETYVV (223 aa). Cys86 (nucleophile) is an active-site residue. Catalysis depends on residues His194 and Glu196.

Part of the FGAM synthase complex composed of 1 PurL, 1 PurQ and 2 PurS subunits.

It is found in the cytoplasm. It carries out the reaction N(2)-formyl-N(1)-(5-phospho-beta-D-ribosyl)glycinamide + L-glutamine + ATP + H2O = 2-formamido-N(1)-(5-O-phospho-beta-D-ribosyl)acetamidine + L-glutamate + ADP + phosphate + H(+). The enzyme catalyses L-glutamine + H2O = L-glutamate + NH4(+). It functions in the pathway purine metabolism; IMP biosynthesis via de novo pathway; 5-amino-1-(5-phospho-D-ribosyl)imidazole from N(2)-formyl-N(1)-(5-phospho-D-ribosyl)glycinamide: step 1/2. Its function is as follows. Part of the phosphoribosylformylglycinamidine synthase complex involved in the purines biosynthetic pathway. Catalyzes the ATP-dependent conversion of formylglycinamide ribonucleotide (FGAR) and glutamine to yield formylglycinamidine ribonucleotide (FGAM) and glutamate. The FGAM synthase complex is composed of three subunits. PurQ produces an ammonia molecule by converting glutamine to glutamate. PurL transfers the ammonia molecule to FGAR to form FGAM in an ATP-dependent manner. PurS interacts with PurQ and PurL and is thought to assist in the transfer of the ammonia molecule from PurQ to PurL. This chain is Phosphoribosylformylglycinamidine synthase subunit PurQ, found in Bacillus mycoides (strain KBAB4) (Bacillus weihenstephanensis).